A 287-amino-acid chain; its full sequence is MAGAKEIRNKIASVKNTQKITGAMEMVAASKMRKAQERMAYSRPYAVTMRKVIGHIALGNLEYKHSYLIEREVKRVGYIIVSTDRGLCGGLNINLFKSALVSMKEWKEQGVEVSTALIGSKAANFFERFGGKALAQVSGMGDAPSIGDLIGSVKVMLQAYDNGEIDRLYLVYNKFVNTMVQTPTVDQMLPLPKADDQALAKRHWDYLYEPDPKHLLNELLIRYVESQVYQGVVENLASEQAARMVAMKAATDNAGDLIGDLQLVYNKARQASITQELTEIVSGASAV.

Belongs to the ATPase gamma chain family. In terms of assembly, F-type ATPases have 2 components, CF(1) - the catalytic core - and CF(0) - the membrane proton channel. CF(1) has five subunits: alpha(3), beta(3), gamma(1), delta(1), epsilon(1). CF(0) has three main subunits: a, b and c.

It is found in the cell inner membrane. Functionally, produces ATP from ADP in the presence of a proton gradient across the membrane. The gamma chain is believed to be important in regulating ATPase activity and the flow of protons through the CF(0) complex. This Tolumonas auensis (strain DSM 9187 / NBRC 110442 / TA 4) protein is ATP synthase gamma chain.